The primary structure comprises 429 residues: Glutamyl-tRNA reductase (429 aa).

Substrate contacts are provided by residues 49 to 52 (TCNR), S107, 112 to 114 (EPQ), and Q118. C50 functions as the Nucleophile in the catalytic mechanism. Position 187-192 (187-192 (GAGETI)) interacts with NADP(+).

This sequence belongs to the glutamyl-tRNA reductase family. Homodimer.

It catalyses the reaction (S)-4-amino-5-oxopentanoate + tRNA(Glu) + NADP(+) = L-glutamyl-tRNA(Glu) + NADPH + H(+). It functions in the pathway porphyrin-containing compound metabolism; protoporphyrin-IX biosynthesis; 5-aminolevulinate from L-glutamyl-tRNA(Glu): step 1/2. Its function is as follows. Catalyzes the NADPH-dependent reduction of glutamyl-tRNA(Glu) to glutamate 1-semialdehyde (GSA). This Pseudomonas fluorescens (strain SBW25) protein is Glutamyl-tRNA reductase.